Here is a 445-residue protein sequence, read N- to C-terminus: Lateral flagellar hook-associated protein 2 (445 aa).

Positions 388-423 (SGAFKSRKEALQANLDRLSDKQTTLERKYDMSYKRY) form a coiled coil.

It belongs to the FliD family. In terms of assembly, homopentamer.

The protein resides in the secreted. The protein localises to the bacterial flagellum. Its function is as follows. Required for the morphogenesis and for the elongation of the flagellar filament by facilitating polymerization of the flagellin monomers at the tip of growing filament. Forms a capping structure, which prevents flagellin subunits (transported through the central channel of the flagellum) from leaking out without polymerization at the distal end. Essential for swarming motility. In Vibrio parahaemolyticus serotype O3:K6 (strain RIMD 2210633), this protein is Lateral flagellar hook-associated protein 2 (fliDL).